A 155-amino-acid chain; its full sequence is Protein SprT-like (155 aa).

One can recognise a SprT-like domain in the interval 7–145 (QRHMEEVSLQ…GSCGGKLIQT (139 aa)). Histidine 67 contacts Zn(2+). The active site involves glutamate 68. A Zn(2+)-binding site is contributed by histidine 71.

The protein belongs to the SprT family. Zn(2+) is required as a cofactor.

It is found in the cytoplasm. The sequence is that of Protein SprT-like from Listeria monocytogenes serotype 4b (strain CLIP80459).